The following is a 1136-amino-acid chain: DNA-directed RNA polymerase I subunit RPA2 (1136 aa).

Positions 1 to 24 (MDPGSRWRNLPSGPSLKHLTDPSY) are disordered. Arg180 serves as a coordination point for RNA. The interval 194–208 (VRPKWKTRGPGYTHY) is loop B. Residues 236–247 (LNFIYRKELFFL) form a loop A region. Asp367 serves as a coordination point for RNA. Fork loop regions lie at residues 439–453 (LRSK…DSGL) and 474–489 (RGAD…VRRL). Residue Lys890 coordinates RNA. Positions 1020 and 1036 each coordinate DNA. Phosphoserine is present on Ser1051. 4 residues coordinate Zn(2+): Cys1071, Cys1074, Cys1099, and Cys1102. The C4-type zinc finger occupies 1071-1102 (CVKCGSLLSPLLEKPPPSWSAMRNRKYNCTLC).

Belongs to the RNA polymerase beta chain family. Component of the RNA polymerase I (Pol I) complex consisting of 13 subunits: a ten-subunit catalytic core composed of POLR1A/RPA1, POLR1B/RPA2, POLR1C/RPAC1, POLR1D/RPAC2, POLR1H/RPA12, POLR2E/RPABC1, POLR2F/RPABC2, POLR2H/RPABC3, POLR2K/RPABC4 and POLR2L/RPABC5; a mobile stalk subunit POLR1F/RPA43 protruding from the core and additional subunits homologous to general transcription factors POLR1E/RPA49 and POLR1G/RPA34. Part of Pol I pre-initiation complex (PIC), in which Pol I core assembles with RRN3 and promoter-bound UTBF and SL1/TIF-IB complex.

The protein resides in the nucleus. The protein localises to the nucleolus. Its subcellular location is the chromosome. The catalysed reaction is RNA(n) + a ribonucleoside 5'-triphosphate = RNA(n+1) + diphosphate. In terms of biological role, catalytic core component of RNA polymerase I (Pol I), a DNA-dependent RNA polymerase which synthesizes ribosomal RNA precursors using the four ribonucleoside triphosphates as substrates. Transcribes 47S pre-rRNAs from multicopy rRNA gene clusters, giving rise to 5.8S, 18S and 28S ribosomal RNAs. Pol I-mediated transcription cycle proceeds through transcription initiation, transcription elongation and transcription termination stages. During transcription initiation, Pol I pre-initiation complex (PIC) is recruited by the selectivity factor 1 (SL1/TIF-IB) complex bound to the core promoter that precedes an rDNA repeat unit. The PIC assembly bends the promoter favoring the formation of the transcription bubble and promoter escape. Once the polymerase has escaped from the promoter it enters the elongation phase during which RNA is actively polymerized, based on complementarity with the template DNA strand. Highly processive, assembles in structures referred to as 'Miller trees' where many elongating Pol I complexes queue and transcribe the same rDNA coding regions. At terminator sequences downstream of the rDNA gene, PTRF interacts with Pol I and halts Pol I transcription leading to the release of the RNA transcript and polymerase from the DNA. Forms Pol I active center together with the largest subunit POLR1A/RPA1. Appends one nucleotide at a time to the 3' end of the nascent RNA, with POLR1A/RPA1 contributing a Mg(2+)-coordinating DxDGD motif, and POLR1B/RPA2 providing lysine residues believed to facilitate Watson-Crick base pairing between the incoming nucleotide and the template base. Typically, Mg(2+) ions direct a 5' nucleoside triphosphate to form a phosphodiester bond with the 3' hydroxyl of the preceding nucleotide of the nascent RNA, with the elimination of pyrophosphate. Has proofreading activity: Pauses and backtracks to allow the cleavage of a missincorporated nucleotide via POLR1H/RPA12. High Pol I processivity is associated with decreased transcription fidelity. The sequence is that of DNA-directed RNA polymerase I subunit RPA2 (POLR1B) from Pongo abelii (Sumatran orangutan).